We begin with the raw amino-acid sequence, 274 residues long: Non-heme haloperoxidase (274 aa).

In terms of domain architecture, AB hydrolase-1 spans 22 to 254; sequence PIMFHHGWPL…RLKVYPGLSH (233 aa). Active-site residues include serine 95, aspartate 225, and histidine 254.

Belongs to the AB hydrolase superfamily. Bacterial non-heme haloperoxidase / perhydrolase family.

This is Non-heme haloperoxidase (thcF) from Rhodococcus erythropolis (Arthrobacter picolinophilus).